The sequence spans 159 residues: Succinate dehydrogenase assembly factor 2, mitochondrial (159 aa).

A mitochondrion-targeting transit peptide spans 1-14 (MASFCLSRCCALRG).

Belongs to the SDHAF2 family. Interacts with the flavoprotein subunit within the SDH catalytic dimer.

Its subcellular location is the mitochondrion matrix. In terms of biological role, plays an essential role in the assembly of succinate dehydrogenase (SDH), an enzyme complex (also referred to as respiratory complex II) that is a component of both the tricarboxylic acid (TCA) cycle and the mitochondrial electron transport chain, and which couples the oxidation of succinate to fumarate with the reduction of ubiquinone (coenzyme Q) to ubiquinol. Required for flavinylation (covalent attachment of FAD) of the flavoprotein subunit of the SDH catalytic dimer. This is Succinate dehydrogenase assembly factor 2, mitochondrial from Culex quinquefasciatus (Southern house mosquito).